Consider the following 405-residue polypeptide: 8-amino-7-oxononanoate synthase 2 (405 aa).

Arginine 20 provides a ligand contact to substrate. Residue 116-117 participates in pyridoxal 5'-phosphate binding; sequence GY. Position 141 (histidine 141) interacts with substrate. The pyridoxal 5'-phosphate site is built by serine 187, histidine 215, and threonine 243. Residue lysine 246 is modified to N6-(pyridoxal phosphate)lysine. Position 369 (threonine 369) interacts with substrate.

This sequence belongs to the class-II pyridoxal-phosphate-dependent aminotransferase family. BioF subfamily. As to quaternary structure, homodimer. Pyridoxal 5'-phosphate serves as cofactor.

It carries out the reaction 6-carboxyhexanoyl-[ACP] + L-alanine + H(+) = (8S)-8-amino-7-oxononanoate + holo-[ACP] + CO2. It participates in cofactor biosynthesis; biotin biosynthesis. In terms of biological role, catalyzes the decarboxylative condensation of pimeloyl-[acyl-carrier protein] and L-alanine to produce 8-amino-7-oxononanoate (AON), [acyl-carrier protein], and carbon dioxide. The protein is 8-amino-7-oxononanoate synthase 2 of Polaromonas sp. (strain JS666 / ATCC BAA-500).